The following is a 264-amino-acid chain: MARCGAGRAAALGLVLRLLLGLRTGPEAAPAPTSAPAHTLVQVSGPRAGSCPTDTFKCLTSGYCVPLSWRCDGDRDCSDGSDEEECRIEPCAQNRQCQPQPALPCSCDNISGCSAGSDKNLNCSRSPCQEGELRCILDDVCIPHTWRCDGHPDCPDSSDELSCDTDTETDKIFQEENATTSMSSMIVEKETSFRNVTVASAGHPSRNPNAYGVIAAAGVLSAILVSATILILLRLRGQGYLPPTGLLVAVKESLLLSERKTSLI.

The first 28 residues, 1–28, serve as a signal peptide directing secretion; it reads MARCGAGRAAALGLVLRLLLGLRTGPEA. An LDL-receptor class A 1 domain is found at 50 to 87; that stretch reads SCPTDTFKCLTSGYCVPLSWRCDGDRDCSDGSDEEECR. Intrachain disulfides connect cysteine 51/cysteine 64, cysteine 58/cysteine 77, and cysteine 71/cysteine 86. Residues tryptophan 69, aspartate 72, aspartate 74, aspartate 76, aspartate 82, and glutamate 83 each contribute to the Ca(2+) site. Residue asparagine 122 is glycosylated (N-linked (GlcNAc...) asparagine). Positions 127-164 constitute an LDL-receptor class A 2 domain; that stretch reads PCQEGELRCILDDVCIPHTWRCDGHPDCPDSSDELSCD. 3 disulfides stabilise this stretch: cysteine 128–cysteine 141, cysteine 135–cysteine 154, and cysteine 148–cysteine 163. Ca(2+)-binding residues include tryptophan 146, aspartate 149, histidine 151, aspartate 153, aspartate 159, and glutamate 160. Residue asparagine 195 is glycosylated (N-linked (GlcNAc...) asparagine). The helical transmembrane segment at 213 to 233 threads the bilayer; that stretch reads VIAAAGVLSAILVSATILILL.

As to quaternary structure, interacts (via LDL-receptor class A domains) with TCN2.

The protein localises to the cell membrane. Its function is as follows. Receptor for transcobalamin saturated with cobalamin (TCbl). Plays an important role in cobalamin uptake. Plasma membrane protein that is expressed on follicular dendritic cells (FDC) and mediates interaction with germinal center B cells. Functions as a costimulator to promote B cell responses to antigenic stimuli; promotes B cell differentiation and proliferation. Germinal center-B (GC-B) cells differentiate into memory B-cells and plasma cells (PC) through interaction with T-cells and follicular dendritic cells (FDC). CD320 augments the proliferation of PC precursors generated by IL-10. The sequence is that of CD320 antigen (Cd320) from Rattus norvegicus (Rat).